Consider the following 121-residue polypeptide: Small ribosomal subunit protein uS13 (121 aa).

Residues 93 to 121 (RKGLPVRGQKTKTNARTRKGKRKTVGAKS) are disordered.

Belongs to the universal ribosomal protein uS13 family. Part of the 30S ribosomal subunit. Forms a loose heterodimer with protein S19. Forms two bridges to the 50S subunit in the 70S ribosome.

Its function is as follows. Located at the top of the head of the 30S subunit, it contacts several helices of the 16S rRNA. In the 70S ribosome it contacts the 23S rRNA (bridge B1a) and protein L5 of the 50S subunit (bridge B1b), connecting the 2 subunits; these bridges are implicated in subunit movement. Contacts the tRNAs in the A and P-sites. This is Small ribosomal subunit protein uS13 from Campylobacter lari (strain RM2100 / D67 / ATCC BAA-1060).